The primary structure comprises 256 residues: MKSIKRIGLCISLLILSIFVTSCDGDNKITGDSKETQIKKSFSKTLDMYPIKNLEDLYDKEGYRDGEFKKGDKGMWTIYTDFAKGNKSDELDDEGMVLNLDRNTRTAKGYYFVKKFYEKDKLPDRKNYKVEMKNNKIILLDKVEDPNLKKRIENFKFFGQYANFKDLENYNNGDVSINWNVPSYDVEYKMSNKDENVKQLRSRYNIPTEKAPMLKMHIDGDLKGSSVGYKRLEIDFSKEGRDISVIDYLSYKPAKK.

An N-terminal signal peptide occupies residues 1–22 (MKSIKRIGLCISLLILSIFVTS). Cys-23 is lipidated: N-palmitoyl cysteine. The S-diacylglycerol cysteine moiety is linked to residue Cys-23.

It belongs to the staphylococcal tandem lipoprotein family.

The protein resides in the cell membrane. This is an uncharacterized protein from Staphylococcus aureus (strain USA300).